Reading from the N-terminus, the 156-residue chain is ATP synthase subunit b (156 aa).

Residues 7–27 (LFVQAIVFLILVWFTMQFVWP) form a helical membrane-spanning segment.

The protein belongs to the ATPase B chain family. In terms of assembly, F-type ATPases have 2 components, F(1) - the catalytic core - and F(0) - the membrane proton channel. F(1) has five subunits: alpha(3), beta(3), gamma(1), delta(1), epsilon(1). F(0) has three main subunits: a(1), b(2) and c(10-14). The alpha and beta chains form an alternating ring which encloses part of the gamma chain. F(1) is attached to F(0) by a central stalk formed by the gamma and epsilon chains, while a peripheral stalk is formed by the delta and b chains.

The protein localises to the cell inner membrane. Its function is as follows. F(1)F(0) ATP synthase produces ATP from ADP in the presence of a proton or sodium gradient. F-type ATPases consist of two structural domains, F(1) containing the extramembraneous catalytic core and F(0) containing the membrane proton channel, linked together by a central stalk and a peripheral stalk. During catalysis, ATP synthesis in the catalytic domain of F(1) is coupled via a rotary mechanism of the central stalk subunits to proton translocation. Functionally, component of the F(0) channel, it forms part of the peripheral stalk, linking F(1) to F(0). The polypeptide is ATP synthase subunit b (Verminephrobacter eiseniae (strain EF01-2)).